The primary structure comprises 232 residues: uncharacterized protein (232 aa).

Residues 10-32 (GLTIYLYPVIAWIILVTKIESGL) form a helical membrane-spanning segment.

The protein localises to the membrane. This is an uncharacterized protein from Archaeoglobus fulgidus (strain ATCC 49558 / DSM 4304 / JCM 9628 / NBRC 100126 / VC-16).